Consider the following 353-residue polypeptide: Ribosomal RNA large subunit methyltransferase M (353 aa).

S-adenosyl-L-methionine contacts are provided by residues Ser-183, 216 to 219, Asp-235, Asp-255, and Asp-271; that span reads APGG. The active-site Proton acceptor is the Lys-300.

This sequence belongs to the class I-like SAM-binding methyltransferase superfamily. RNA methyltransferase RlmE family. RlmM subfamily. Monomer.

The protein resides in the cytoplasm. The catalysed reaction is cytidine(2498) in 23S rRNA + S-adenosyl-L-methionine = 2'-O-methylcytidine(2498) in 23S rRNA + S-adenosyl-L-homocysteine + H(+). Its function is as follows. Catalyzes the 2'-O-methylation at nucleotide C2498 in 23S rRNA. The chain is Ribosomal RNA large subunit methyltransferase M from Azotobacter vinelandii (strain DJ / ATCC BAA-1303).